The chain runs to 157 residues: Phosphopantetheine adenylyltransferase (157 aa).

This sequence belongs to the eukaryotic CoaD family. Monomer.

It localises to the cytoplasm. The enzyme catalyses (R)-4'-phosphopantetheine + ATP + H(+) = 3'-dephospho-CoA + diphosphate. Its pathway is cofactor biosynthesis; coenzyme A biosynthesis. Functionally, reversibly transfers an adenylyl group from ATP to 4'-phosphopantetheine, yielding dephospho-CoA (dPCoA) and pyrophosphate. This is Phosphopantetheine adenylyltransferase from Pyrococcus abyssi (strain GE5 / Orsay).